The sequence spans 531 residues: Cytochrome P450 monooxygenase acuC (531 aa).

A helical transmembrane segment spans residues 3–23 (PIVWLLGGAIALLVVVIRAAW). C447 lines the heme pocket.

The protein belongs to the cytochrome P450 family. The cofactor is heme.

It is found in the endoplasmic reticulum membrane. The catalysed reaction is 3-methylphenol + reduced [NADPH--hemoprotein reductase] + O2 = 3-hydroxybenzyl alcohol + oxidized [NADPH--hemoprotein reductase] + H2O + H(+). It participates in secondary metabolite biosynthesis. Its function is as follows. Cytochrome P450 monooxygenase; part of the gene cluster that mediates the biosynthesis of aculins. The pathway begins with the synthesis of 6-methylsalicylic acid by the polyketide synthase (PKS) acuA via condensation of acetate and malonate units. The 6-methylsalicylic acid decarboxylase acuB then catalyzes the decarboxylation of 6-methylsalicylic acid to yield m-cresol (also known as 3-methylphenol). These first reactions occur in the cytosol. The intermediate m-cresol is then transported into the endoplasmic reticulum where the cytochrome P450 monooxygenase acuC converts it to m-hydroxybenzyl alcohol, which is further converted to gentisyl alcohol by the cytochrome P450 monooxygenase acuD. Gentisyl alcohol is further oxidized by the oxidoreductase acuE that probably catalyzes hydroxylation of the aromatic ring. The aromatic system might then be opened by oxidation through a Baeyer-Villiger type of oxidation, which could be catalyzed by acuF, with the carboxylic acid at C-1 subsequently reduced to an aldehyde by acuG. Subsequently, a hemiacetal is formed, before the dehydrogenase acuH would reduce the double bond between C-4 and C-6. Finally, keto-enol tautomerism results in formation of aculinic acid, which exists as two diastereomers (both R/S configurations at C-1) by non-enzymatic hemiacetal formation. The carboxypeptidase acuI could be involved in the linking of aculinic acid to an aculene A moiety produced by the aculene biosynthesis cluster and which leads to the production of aculin A. AcuI may also be involved in the attachment of proline to aculinic acid to form epi-aculins A and B. The chain is Cytochrome P450 monooxygenase acuC from Aspergillus aculeatus (strain ATCC 16872 / CBS 172.66 / WB 5094).